We begin with the raw amino-acid sequence, 366 residues long: Flagellar P-ring protein (366 aa).

The first 24 residues, 1-24, serve as a signal peptide directing secretion; sequence MWPLLLAVALSTLLPLAMPGSAGA.

It belongs to the FlgI family. As to quaternary structure, the basal body constitutes a major portion of the flagellar organelle and consists of four rings (L,P,S, and M) mounted on a central rod.

The protein localises to the periplasm. Its subcellular location is the bacterial flagellum basal body. Functionally, assembles around the rod to form the L-ring and probably protects the motor/basal body from shearing forces during rotation. The chain is Flagellar P-ring protein from Nitratidesulfovibrio vulgaris (strain ATCC 29579 / DSM 644 / CCUG 34227 / NCIMB 8303 / VKM B-1760 / Hildenborough) (Desulfovibrio vulgaris).